A 133-amino-acid chain; its full sequence is Large ribosomal subunit protein uL22c (133 aa).

This sequence belongs to the universal ribosomal protein uL22 family. In terms of assembly, part of the 50S ribosomal subunit.

Its subcellular location is the plastid. It localises to the chloroplast. Functionally, this protein binds specifically to 23S rRNA. The globular domain of the protein is located near the polypeptide exit tunnel on the outside of the subunit, while an extended beta-hairpin is found that lines the wall of the exit tunnel in the center of the 70S ribosome. The sequence is that of Large ribosomal subunit protein uL22c (rpl22) from Manihot esculenta (Cassava).